The chain runs to 168 residues: Histone doublet miniH2B-H2A (168 aa).

Its subcellular location is the host nucleus. The protein localises to the host cytoplasm. The protein resides in the virion. Its function is as follows. Histone-like protein that is recruited to viral factories during viral replication and participates in viral DNA packaging and virion production probably by forming unstable nucleosome-like particles. May compact the viral DNA. This chain is Histone doublet miniH2B-H2A, found in Melbournevirus (MelV).